Reading from the N-terminus, the 274-residue chain is Siroheme biosynthesis protein MET8 (274 aa).

NAD(+)-binding positions include 23 to 24 (EV), 43 to 45 (SPD), and Phe-93. Asp-141 (proton acceptor) is an active-site residue.

This sequence belongs to the precorrin-2 dehydrogenase / sirohydrochlorin ferrochelatase family. MET8 subfamily. As to quaternary structure, homodimer.

The enzyme catalyses precorrin-2 + NAD(+) = sirohydrochlorin + NADH + 2 H(+). It catalyses the reaction siroheme + 2 H(+) = sirohydrochlorin + Fe(2+). Its pathway is porphyrin-containing compound metabolism; siroheme biosynthesis; siroheme from sirohydrochlorin: step 1/1. It functions in the pathway porphyrin-containing compound metabolism; siroheme biosynthesis; sirohydrochlorin from precorrin-2: step 1/1. Functionally, catalyzes the conversion of precorrin-2 into siroheme. This reaction consist of the NAD-dependent oxidation of precorrin-2 into sirohydrochlorin and its subsequent ferrochelation into siroheme. The chain is Siroheme biosynthesis protein MET8 from Saccharomyces cerevisiae (strain ATCC 204508 / S288c) (Baker's yeast).